A 680-amino-acid chain; its full sequence is Enzymatic polyprotein (680 aa).

The interval 41–131 is protease; sequence LHCFVDTGAS…LYEPFIQFTD (91 aa). D46 is an active-site residue. The region spanning 273-453 is the Reverse transcriptase domain; that stretch reads LKVIKPSKSP…KKINFLGLEI (181 aa).

The protein belongs to the caulimoviridae enzymatic polyprotein family.

The enzyme catalyses DNA(n) + a 2'-deoxyribonucleoside 5'-triphosphate = DNA(n+1) + diphosphate. Functionally, encodes for at least two polypeptides: protease (PR) and reverse transcriptase (RT). The protease processes the polyprotein in cis. Reverse transcriptase is multifunctional enzyme that converts the viral RNA genome into dsDNA in viral cytoplasmic capsids. This enzyme displays a DNA polymerase activity that can copy either DNA or RNA templates, and a ribonuclease H (RNase H) activity that cleaves the RNA strand of RNA-DNA heteroduplexes in a partially processive 3'- to 5'-endonucleasic mode. Neo-synthesized pregenomic RNA (pgRNA) are encapsidated, and reverse-transcribed inside the nucleocapsid. Partial (+)DNA is synthesized from the (-)DNA template and generates the relaxed circular DNA (RC-DNA) genome. After budding and infection, the RC-DNA migrates in the nucleus, and is converted into a plasmid-like covalently closed circular DNA (cccDNA). The polypeptide is Enzymatic polyprotein (Cauliflower mosaic virus (strain NY8153) (CaMV)).